We begin with the raw amino-acid sequence, 178 residues long: ATP synthase subunit delta (178 aa).

This sequence belongs to the ATPase delta chain family. As to quaternary structure, F-type ATPases have 2 components, F(1) - the catalytic core - and F(0) - the membrane proton channel. F(1) has five subunits: alpha(3), beta(3), gamma(1), delta(1), epsilon(1). F(0) has three main subunits: a(1), b(2) and c(10-14). The alpha and beta chains form an alternating ring which encloses part of the gamma chain. F(1) is attached to F(0) by a central stalk formed by the gamma and epsilon chains, while a peripheral stalk is formed by the delta and b chains.

Its subcellular location is the cell membrane. In terms of biological role, f(1)F(0) ATP synthase produces ATP from ADP in the presence of a proton or sodium gradient. F-type ATPases consist of two structural domains, F(1) containing the extramembraneous catalytic core and F(0) containing the membrane proton channel, linked together by a central stalk and a peripheral stalk. During catalysis, ATP synthesis in the catalytic domain of F(1) is coupled via a rotary mechanism of the central stalk subunits to proton translocation. Its function is as follows. This protein is part of the stalk that links CF(0) to CF(1). It either transmits conformational changes from CF(0) to CF(1) or is implicated in proton conduction. This is ATP synthase subunit delta from Streptococcus pyogenes serotype M3 (strain SSI-1).